The chain runs to 548 residues: Chaperonin GroEL (548 aa).

ATP-binding positions include 30-33 (TLGP), K51, 87-91 (DGTTT), G415, 479-481 (NAA), and D495.

This sequence belongs to the chaperonin (HSP60) family. As to quaternary structure, forms a cylinder of 14 subunits composed of two heptameric rings stacked back-to-back. Interacts with the co-chaperonin GroES. In terms of processing, UMPylated on a tyrosine residue by YdiU under ATP-limited conditions.

The protein resides in the cytoplasm. The catalysed reaction is ATP + H2O + a folded polypeptide = ADP + phosphate + an unfolded polypeptide.. UMPylation of the chaperone by YdiU negatively regulates its activity, facilitating Salmonella survival under ATP-limited conditions. Functionally, together with its co-chaperonin GroES, plays an essential role in assisting protein folding. The GroEL-GroES system forms a nano-cage that allows encapsulation of the non-native substrate proteins and provides a physical environment optimized to promote and accelerate protein folding. The polypeptide is Chaperonin GroEL (Salmonella typhimurium (strain LT2 / SGSC1412 / ATCC 700720)).